The following is an 833-amino-acid chain: F1 capsule-anchoring protein (833 aa).

Residues 1-25 (MRYSKLFLCAGLTLATLPCWGRAYT) form the signal peptide. A disulfide bridge connects residues cysteine 807 and cysteine 829.

Belongs to the fimbrial export usher family.

The protein localises to the cell outer membrane. In terms of biological role, a probable role in capsular biogenesis. It is likely that the caf1A molecule binds F1 antigen subunits during the extracellular secretion process. This chain is F1 capsule-anchoring protein (caf1A), found in Yersinia pestis.